Here is a 1133-residue protein sequence, read N- to C-terminus: Protein TPR3 (1133 aa).

The region spanning 4 to 36 is the LisH domain; it reads LSRELVFLILQFLDEEKFKETVHKLEQESGFYF. The CTLH domain maps to 34–92; sequence FYFNMKYFEDEVINGNWDEVERYLGGFTKVDDNRYSMKIFFEIRKQKYLEALDKHDRSK. Positions 287–307 are disordered; the sequence is PTTANPSMDYPSGDSDHVSKR. 12 WD repeats span residues 348–388, 410–449, 455–496, 499–540, 543–586, 590–629, 634–673, 771–810, 837–875, 878–918, 921–960, and 1014–1053; these read SQGS…RLVL, DPTV…DIRQ, AHVG…KQFT, GHEA…SRVD, APGH…VKRT, FRKR…LLTT, GGLP…RLLR, MRTS…RNSS, NPEE…TMTT, PPPP…VKSK, GHSK…KLKS, and ENSS…LQCR. The disordered stretch occupies residues 1099-1133; that stretch reads ESERKWGNPPPAENGSTSALSTPPNGASSSDQPER. Residues 1112–1133 show a composition bias toward polar residues; that stretch reads NGSTSALSTPPNGASSSDQPER.

As to quaternary structure, tetramer. Interacts with D53. Interacts with MODD and HDAC1. Interacts with WOX1. Interacts with MOF1. As to expression, expressed in panicles, stems, leaves, spikelets and seed endosperm.

Probable downstream regulator of strigolactones signaling. Functions in a complex with MODD and HDAC1 to down-regulate the histone acetylation level at BZIP46 target genes. BZIP46 is a positive regulator of abscisic acid (ABA) signaling and drought stress tolerance. This chain is Protein TPR3, found in Oryza sativa subsp. japonica (Rice).